The following is a 360-amino-acid chain: MLYWLVDFASSVPALNVFRYITFRTGGAMVTGALFVFMFGPWIIDNLRLRQGKGQPIRSDGPQSHLSKKGTPTMGGLMILSGLVVGTVLWANPLNPYVWIVLAVTLGFGFVGFYDDYLKVTKQSDKGFSGRTRLAIETIIAAAACYALMRLGRDPLSSSLAVPFLKDTAIYLGWFFVIFGGFIVVGAGNAVNLTDGLDGLAIVPVMIAAASFGLVSYLAGNAVFADYLQINYVAGTGELAVLCGALLGAGLGFLWFNAPPASIFMGDTGSLALGGMLGTIAVAVKHEFVLAVIGGLFVLEAVSVIVQVASFKLTGKRVFRMAPIHHHFEQKGWTEPQIVIRFWIISVMLALAGLSTLKLR.

10 helical membrane-spanning segments follow: residues 25-45, 71-91, 94-114, 129-148, 168-188, 199-219, 239-259, 263-283, 288-308, and 337-357; these read TGGAMVTGALFVFMFGPWIID, TPTMGGLMILSGLVVGTVLWA, LNPYVWIVLAVTLGFGFVGFY, SGRTRLAIETIIAAAACYAL, TAIYLGWFFVIFGGFIVVGAG, GLAIVPVMIAAASFGLVSYLA, LAVLCGALLGAGLGFLWFNAP, IFMGDTGSLALGGMLGTIAVA, FVLAVIGGLFVLEAVSVIVQV, and QIVIRFWIISVMLALAGLSTL.

Belongs to the glycosyltransferase 4 family. MraY subfamily. Requires Mg(2+) as cofactor.

It is found in the cell inner membrane. It carries out the reaction UDP-N-acetyl-alpha-D-muramoyl-L-alanyl-gamma-D-glutamyl-meso-2,6-diaminopimeloyl-D-alanyl-D-alanine + di-trans,octa-cis-undecaprenyl phosphate = di-trans,octa-cis-undecaprenyl diphospho-N-acetyl-alpha-D-muramoyl-L-alanyl-D-glutamyl-meso-2,6-diaminopimeloyl-D-alanyl-D-alanine + UMP. It participates in cell wall biogenesis; peptidoglycan biosynthesis. In terms of biological role, catalyzes the initial step of the lipid cycle reactions in the biosynthesis of the cell wall peptidoglycan: transfers peptidoglycan precursor phospho-MurNAc-pentapeptide from UDP-MurNAc-pentapeptide onto the lipid carrier undecaprenyl phosphate, yielding undecaprenyl-pyrophosphoryl-MurNAc-pentapeptide, known as lipid I. In Rhodopseudomonas palustris (strain BisA53), this protein is Phospho-N-acetylmuramoyl-pentapeptide-transferase.